The primary structure comprises 31 residues: Photosystem I reaction center subunit XII (31 aa).

The chain crosses the membrane as a helical span at residues 6-25; the sequence is TQILAALVVALLPAFLAFRL.

This sequence belongs to the PsaM family.

The protein resides in the cellular thylakoid membrane. The sequence is that of Photosystem I reaction center subunit XII from Synechocystis sp. (strain ATCC 27184 / PCC 6803 / Kazusa).